A 119-amino-acid chain; its full sequence is Ethylene-responsive proteinase inhibitor 1 (119 aa).

An N-terminal signal peptide occupies residues 1–27; sequence MEANKSMVKLVAFLIILVSSCFQSLTA. The propeptide occupies 28-48; that stretch reads QDLEIEVSDGLNVLQVHDVSQ.

It belongs to the protease inhibitor I13 (potato type I serine protease inhibitor) family.

It is found in the secreted. This Solanum lycopersicum (Tomato) protein is Ethylene-responsive proteinase inhibitor 1.